The sequence spans 56 residues: uncharacterized protein (56 aa).

This is an uncharacterized protein from Bacillus subtilis (strain 168).